The chain runs to 136 residues: Protein LpdD (136 aa).

This sequence belongs to the CinA family.

In terms of biological role, probably involved in tannin degradation, however the precise biochemical function in metabolism of gallate is unknown. The protein is Protein LpdD of Lactiplantibacillus plantarum (strain ATCC BAA-793 / NCIMB 8826 / WCFS1) (Lactobacillus plantarum).